A 326-amino-acid polypeptide reads, in one-letter code: Protease inhibitor (326 aa).

A signal peptide spans 1 to 24; that stretch reads MKTIRTGMMTLAALAVLGTNVVSA. 2 tandem repeats follow at residues 177–208 and 272–304. Positions 177–304 are 2 X 32 AA approximate repeats; it reads IILHVDKETK…DLKAEMKVFA (128 aa).

Post-translationally, proteolytically cleaved to yield at least three forms (BBRPI-A, -B, and -C).

Its subcellular location is the secreted. Its function is as follows. Shows inhibitory activity towards serine proteases, such as trypsin, chymotrypsin and subtilisin. May form a trypsin-inhibitor complex in a molar ratio of 1:1. In Brevibacillus choshinensis, this protein is Protease inhibitor.